The chain runs to 177 residues: Isopentenyl-diphosphate Delta-isomerase 1 (177 aa).

Positions 24 and 30 each coordinate Mn(2+). A Nudix hydrolase domain is found at S28 to A160. C65 is an active-site residue. C65 is a binding site for Mg(2+). Residue H67 participates in Mn(2+) binding. Position 85 (E85) interacts with Mg(2+). Mn(2+)-binding residues include E110 and E112. E112 is a catalytic residue.

It belongs to the IPP isomerase type 1 family. It depends on Mg(2+) as a cofactor. Requires Mn(2+) as cofactor.

It is found in the cytoplasm. It carries out the reaction isopentenyl diphosphate = dimethylallyl diphosphate. It functions in the pathway isoprenoid biosynthesis; dimethylallyl diphosphate biosynthesis; dimethylallyl diphosphate from isopentenyl diphosphate: step 1/1. Functionally, catalyzes the 1,3-allylic rearrangement of the homoallylic substrate isopentenyl (IPP) to its highly electrophilic allylic isomer, dimethylallyl diphosphate (DMAPP). The chain is Isopentenyl-diphosphate Delta-isomerase 1 from Aromatoleum aromaticum (strain DSM 19018 / LMG 30748 / EbN1) (Azoarcus sp. (strain EbN1)).